A 115-amino-acid chain; its full sequence is MELLNQKKIASLTEEIGADNVPVLLEIFLSELESYLKVLCDATYSDKLVYLKDISHALKSSAASFGADALCHFAVEIDTRAKEGDALDETQDVVAMIDRLHQTQQAYLSWQANGF.

Residues 17-107 enclose the HPt domain; sequence GADNVPVLLE…DRLHQTQQAY (91 aa). His-56 is subject to Phosphohistidine.

Monomer.

Its function is as follows. Phosphorelay protein which receives a sensory signal from a sensor kinase and transmit it to LuxO. At low cell density, a phosphoryl group is transferred from the sensor kinase, probably on His-56 and this phosphoryl group is further transferred to LuxO. This Vibrio vulnificus (strain CMCP6) protein is Phosphorelay protein LuxU (luxU).